We begin with the raw amino-acid sequence, 1282 residues long: Protein crumbs homolog 2 (1282 aa).

Positions 1 to 35 (MALVGPRIWGPRRDIYPLLLLLLLLLLLLLPWVPA) are cleaved as a signal peptide. Topologically, residues 36–1221 (GLVPPETPSV…PLPLPFPLLE (1186 aa)) are extracellular. The region spanning 71–110 (ELGGCATQPCHHGALCVPQGPDPNSFRCYCVPGFQGPHCE) is the EGF-like 1 domain. 27 disulfide bridges follow: Cys75-Cys86, Cys80-Cys98, Cys100-Cys109, Cys116-Cys127, Cys121-Cys136, Cys138-Cys147, Cys154-Cys165, Cys159-Cys174, Cys176-Cys185, Cys192-Cys203, Cys197-Cys212, Cys214-Cys224, Cys231-Cys242, Cys236-Cys251, Cys253-Cys262, Cys269-Cys280, Cys274-Cys310, Cys312-Cys321, Cys328-Cys339, Cys333-Cys348, Cys350-Cys359, Cys366-Cys377, Cys371-Cys386, Cys388-Cys397, Cys404-Cys415, Cys409-Cys428, and Cys430-Cys439. The 37-residue stretch at 112-148 (DIDECASRPCQHGGTCQNLADHYECHCPLGYAGVTCE) folds into the EGF-like 2; calcium-binding domain. The EGF-like 3; calcium-binding domain maps to 150-186 (EVDECSSAPCLHGGSCLDGVGSYRCVCAPGYAGANCQ). The region spanning 188–225 (DVDECQSQPCAHGGVCHDLVNGFRCDCADTGYEGARCE) is the EGF-like 4; calcium-binding domain. EGF-like domains lie at 227 to 263 (EVLE…ERCE) and 265 to 322 (DEDE…NDCS). Asn239 carries N-linked (GlcNAc...) asparagine glycosylation. O-linked (Glc...) serine glycosylation is present at Ser271. In terms of domain architecture, EGF-like 7; calcium-binding spans 324–360 (DVDECASGPCLNGGSCQDLPNGFQCYCQDGYTGLTCQ). The EGF-like 8; calcium-binding domain maps to 362–398 (DMDECQSEPCLHGGTCSDTVAGYICQCPEAWGGHDCS). One can recognise an EGF-like 9 domain in the interval 400–440 (QLTGCQGHTCPLAATCIPTFKSGLHGYFCRCPPGTYGPFCG). The N-linked (GlcNAc...) asparagine glycan is linked to Asn442. The Laminin G-like 1 domain maps to 444 to 607 (TFSVVSGSSV…ELKGTVLLGC (164 aa)). 4 disulfide bridges follow: Cys583–Cys607, Cys613–Cys624, Cys618–Cys633, and Cys635–Cys644. One can recognise an EGF-like 10 domain in the interval 609–645 (RREPCQPLPCAHGGACVDLWTHFRCDCPRPYRGATCT). A Laminin G-like 2 domain is found at 649 to 808 (PAATFGLGGA…GQSSNLTQGC (160 aa)). Residues Asn672, Asn693, Asn789, and Asn803 are each glycosylated (N-linked (GlcNAc...) asparagine). 4 cysteine pairs are disulfide-bonded: Cys769/Cys808, Cys814/Cys825, Cys819/Cys834, and Cys836/Cys845. The EGF-like 11 domain maps to 810 to 846 (SEDTCNPNPCFNGGTCHVTWNDFYCTCSENFTGPTCA). Residues Asn839, Asn889, Asn929, and Asn1006 are each glycosylated (N-linked (GlcNAc...) asparagine). Residues 872-1051 (VAEATFREGP…PGSPAVSLGC (180 aa)) enclose the Laminin G-like 3 domain. 13 cysteine pairs are disulfide-bonded: Cys1010/Cys1051, Cys1057/Cys1068, Cys1062/Cys1077, Cys1079/Cys1088, Cys1095/Cys1105, Cys1100/Cys1115, Cys1117/Cys1126, Cys1135/Cys1147, Cys1141/Cys1156, Cys1158/Cys1167, Cys1174/Cys1185, Cys1179/Cys1194, and Cys1196/Cys1205. 4 consecutive EGF-like domains span residues 1053-1089 (GGPV…PRCE), 1091-1127 (RADP…PRCR), 1131-1168 (LPQG…LRCQ), and 1170-1206 (LDKP…QFCE). 2 N-linked (GlcNAc...) asparagine glycosylation sites follow: Asn1138 and Asn1155. Residues 1222–1242 (VAVPAACACLLLLLLGLLSGI) form a helical membrane-spanning segment. Residues 1243–1282 (LAARKRRQSEGTYSPSQQEVAGARLEMDSVLKVPPEERLI) are Cytoplasmic-facing. The interval 1246–1282 (RKRRQSEGTYSPSQQEVAGARLEMDSVLKVPPEERLI) is interaction with EPB41L5.

The protein belongs to the Crumbs protein family. In terms of assembly, interacts (via intracellular domain) with EPB41L5. In terms of processing, O-glucosylated by POGLUT1 at Ser-271; consists of an O-glucose trisaccharide, in which the O-glucose is elongated by the addition of two xylose residues. O-glucosylation is required for localization at the plasma membrane. In terms of tissue distribution, in the adult eye, strongly expressed in the outer nuclear layer, containing the cell bodies of the photoreceptor cells, and in the inner nuclear layer, containing the cell bodies of the horizontal, bipolar, amacrine, and Mueller glial cells. Also expressed in some cells in the ganglion cell layer (or may be displaced amacrine cells rather than ganglion cells).

It is found in the apical cell membrane. Functionally, apical polarity protein that plays a central role during the epithelial-to-mesenchymal transition (EMT) at gastrulation, when newly specified mesodermal cells move inside the embryo. Acts by promoting cell ingression, the process by which cells leave the epithelial epiblast and move inside the embryo to form a new tissue layer. The anisotropic distribution of CRB2 and MYH10/myosin-IIB at cell edges define which cells will ingress: cells with high apical CRB2 are probably extruded from the epiblast by neighboring cells with high levels of apical MYH10/myosin-IIB. Also required for maintenance of the apical polarity complex during development of the cortex. This is Protein crumbs homolog 2 from Mus musculus (Mouse).